The following is a 165-amino-acid chain: GKQSTSKSVTREKKDVKKTVAPKKAIKKVTKKSTTPVKTSKAAPASTTPIKDTTPVKADAKKIHRTKTMKESVSDAKKTVHKSAGDKKLSRSQKPAKREAAKKIVHPAKKAAAKPKTAKKEVKKDTKPVKKDAKKDTKPVKKDAKKDTKPAKKDTKKATKGSKKN.

A disordered region spans residues 1–165; the sequence is GKQSTSKSVT…KKATKGSKKN (165 aa). The span at 9 to 18 shows a compositional bias: basic and acidic residues; that stretch reads VTREKKDVKK. Residues 20 to 31 show a composition bias toward basic residues; it reads VAPKKAIKKVTK. The span at 32 to 41 shows a compositional bias: low complexity; that stretch reads KSTTPVKTSK. Residues threonine 48 and threonine 54 each carry the phosphothreonine modification. The segment covering 68–89 has biased composition (basic and acidic residues); that stretch reads TMKESVSDAKKTVHKSAGDKKL. A Phosphoserine modification is found at serine 83. Basic residues predominate over residues 103 to 117; sequence KIVHPAKKAAAKPKT. Residue threonine 117 is modified to Phosphothreonine. The segment covering 118–157 has biased composition (basic and acidic residues); that stretch reads AKKEVKKDTKPVKKDAKKDTKPVKKDAKKDTKPAKKDTKK.

Post-translationally, cell-growth/division-associated phosphorylation by a CDC2-like kinase. Is additionally phosphorylated on either Ser-33, Thr-34 or Thr-35, and on either Thr-39 or Ser-40.

It localises to the nucleus. Its subcellular location is the chromosome. In terms of biological role, histones H1 are necessary for the condensation of nucleosome chains into higher-order structures. This is Histone H1 (HHO) from Tetrahymena pyriformis.